The sequence spans 721 residues: Far upstream element-binding protein 2 (721 aa).

The interval 1-148 is disordered; sequence MSDYSTGGPP…HPPPRTSMTE (148 aa). Ser2 bears the N-acetylserine mark. The segment covering 8-17 has biased composition (pro residues); that stretch reads GPPPGPPPPA. 2 stretches are compositionally biased toward gly residues: residues 18–28 and 36–69; these read GGGGGAAGAGG and GAGD…GGPG. At Arg40 the chain carries Omega-N-methylarginine. Position 88 is an N6-acetyllysine (Lys88). Phosphothreonine is present on Thr101. Residues 111 to 123 are compositionally biased toward basic and acidic residues; that stretch reads RQLEDGDQPDSKK. A Glycyl lysine isopeptide (Lys-Gly) (interchain with G-Cter in SUMO1); alternate cross-link involves residue Lys122. Lys122 participates in a covalent cross-link: Glycyl lysine isopeptide (Lys-Gly) (interchain with G-Cter in SUMO2); alternate. 6 positions are modified to phosphoserine: Ser126, Ser130, Ser182, Ser185, Ser194, and Ser275. KH domains lie at 145-209, 234-300, and 323-387; these read SMTE…KMML, GTVQ…CEMV, and GGGI…ARII. A disordered region spans residues 394–422; that stretch reads LRSGPPGPPGAPGMPPGGRGRGRGQGNWG. Pro residues predominate over residues 398–408; the sequence is PPGPPGAPGMP. The segment covering 409–422 has biased composition (gly residues); sequence PGGRGRGRGQGNWG. Omega-N-methylarginine occurs at positions 412, 414, 416, and 443. The KH 4 domain occupies 425-492; sequence GGEMTFSIPT…QQIDHAKQLI (68 aa). A Phosphoserine modification is found at Ser481. The tract at residues 498-570 is disordered; the sequence is GPLCPVGPGP…HDPNKAAAAA (73 aa). Pro residues-rich tracts occupy residues 502–521 and 529–543; these read PVGP…PFHP and PGAP…PHQY. Repeat 1 spans residues 572-583; it reads DPNAAWAAYYSH. A 4 X 12 AA imperfect repeats region spans residues 572-685; it reads DPNAAWAAYY…SAAWAEYYRQ (114 aa). Residues 588–614 are compositionally biased toward pro residues; sequence PPGPVPGPAPAPAAPPAQGEPPQPPPT. 3 disordered regions span residues 588–650, 659–678, and 688–721; these read PPGP…KAWE, VATG…YSAA, and AYYG…ELHL. A run of 3 repeats spans residues 618 to 629, 644 to 655, and 674 to 685.

The protein belongs to the KHSRP family. Part of a ternary complex containing FUBP2, PTBP1, PTBP2 and HNRPH1. Interacts with PARN. Interacts with PQBP1.

It is found in the nucleus. The protein localises to the cytoplasm. In terms of biological role, part of a ternary complex that binds to the downstream control sequence (DCS) of the pre-mRNA. Mediates exon inclusion in transcripts that are subject to tissue-specific alternative splicing. May interact with single-stranded DNA from the far-upstream element (FUSE). May activate gene expression. Also involved in degradation of inherently unstable mRNAs that contain AU-rich elements (AREs) in their 3'-UTR, possibly by recruiting degradation machinery to ARE-containing mRNAs. Binds to the dendritic targeting element and may play a role in mRNA trafficking. The polypeptide is Far upstream element-binding protein 2 (Khsrp) (Rattus norvegicus (Rat)).